A 492-amino-acid chain; its full sequence is Transmembrane protein 39B (492 aa).

Residues 1–53 (MGGRRGPNRTSYYRNPLCEPGSSGASGGGHSSSASVSSVRSRSRTTSGTGLSS) are disordered. A glycan (N-linked (GlcNAc...) asparagine) is linked at Asn-8. Over residues 31–53 (SSSASVSSVRSRSRTTSGTGLSS) the composition is skewed to low complexity. 8 helical membrane-spanning segments follow: residues 77–97 (SILF…VHYI), 115–135 (TSLN…IVLG), 153–175 (SLFR…GWSL), 185–205 (TYSF…IPFL), 288–308 (EVLV…VWFV), 322–342 (LFLL…LPAS), 421–441 (ILNI…YSLM), and 447–467 (HQTI…FKLL).

It belongs to the TMEM39 family.

Its subcellular location is the endoplasmic reticulum membrane. Its function is as follows. May protect the cells against DNA damage caused by exposure to the cold-warming stress and facilitates tissue damage repair during the recovery phase. The chain is Transmembrane protein 39B from Rattus norvegicus (Rat).